We begin with the raw amino-acid sequence, 1379 residues long: DNA-directed RNA polymerase subunit beta'' (1379 aa).

The Zn(2+) site is built by cysteine 220, cysteine 293, cysteine 300, and cysteine 303.

Belongs to the RNA polymerase beta' chain family. RpoC2 subfamily. In terms of assembly, in plastids the minimal PEP RNA polymerase catalytic core is composed of four subunits: alpha, beta, beta', and beta''. When a (nuclear-encoded) sigma factor is associated with the core the holoenzyme is formed, which can initiate transcription. The cofactor is Zn(2+).

The protein resides in the plastid. Its subcellular location is the chloroplast. The enzyme catalyses RNA(n) + a ribonucleoside 5'-triphosphate = RNA(n+1) + diphosphate. Its function is as follows. DNA-dependent RNA polymerase catalyzes the transcription of DNA into RNA using the four ribonucleoside triphosphates as substrates. The sequence is that of DNA-directed RNA polymerase subunit beta'' from Capsella bursa-pastoris (Shepherd's purse).